Consider the following 131-residue polypeptide: DNA-directed RNA polymerases I, II, and III subunit RPABC2 (131 aa).

Positions 1–24 (MDDADYDNDDVGGDDFDDVDEDVD) are disordered.

It belongs to the archaeal Rpo6/eukaryotic RPB6 RNA polymerase subunit family. As to quaternary structure, component of the RNA polymerase I (Pol I), RNA polymerase II (Pol II) and RNA polymerase III (Pol III) complexes consisting of at least 13, 12 and 17 subunits, respectively.

Its subcellular location is the nucleus. Its function is as follows. DNA-dependent RNA polymerases catalyze the transcription of DNA into RNA using the four ribonucleoside triphosphates as substrates. Common component of RNA polymerases I, II and III which synthesize ribosomal RNA precursors, mRNA precursors and many functional non-coding RNAs, and small RNAs, such as 5S rRNA and tRNAs, respectively. Pol II is the central component of the basal RNA polymerase II transcription machinery. Pols are composed of mobile elements that move relative to each other. In Pol II, Polr2F/RPB6 is part of the clamp element and together with parts of Polr2A/RPB1 and RPB2 forms a pocket to which the Polr2D/RPB4-Polr2G/RPB7 subcomplex binds. The polypeptide is DNA-directed RNA polymerases I, II, and III subunit RPABC2 (Drosophila melanogaster (Fruit fly)).